Here is a 366-residue protein sequence, read N- to C-terminus: Flagellar P-ring protein (366 aa).

The signal sequence occupies residues 1–23 (MRTLKIFALAVSLLSMLAAPVQA).

This sequence belongs to the FlgI family. The basal body constitutes a major portion of the flagellar organelle and consists of four rings (L,P,S, and M) mounted on a central rod.

The protein resides in the periplasm. It is found in the bacterial flagellum basal body. Its function is as follows. Assembles around the rod to form the L-ring and probably protects the motor/basal body from shearing forces during rotation. This Idiomarina loihiensis (strain ATCC BAA-735 / DSM 15497 / L2-TR) protein is Flagellar P-ring protein.